The sequence spans 543 residues: Proline--tRNA ligase, chloroplastic/mitochondrial (543 aa).

Positions 41–63 (ATAPSGTASPETKSSEVDRLRSD) are disordered. Positions 53-63 (KSSEVDRLRSD) are enriched in basic and acidic residues.

This sequence belongs to the class-II aminoacyl-tRNA synthetase family.

Its subcellular location is the plastid. The protein resides in the chloroplast. It localises to the mitochondrion. It carries out the reaction tRNA(Pro) + L-proline + ATP = L-prolyl-tRNA(Pro) + AMP + diphosphate. Functionally, catalyzes the attachment of proline to tRNA(Pro) in a two-step reaction: proline is first activated by ATP to form Pro-AMP and then transferred to the acceptor end of tRNA(Pro). The polypeptide is Proline--tRNA ligase, chloroplastic/mitochondrial (Arabidopsis thaliana (Mouse-ear cress)).